The primary structure comprises 312 residues: Cathepsin O (312 aa).

An N-terminal signal peptide occupies residues M1–G23. Positions T24–S98 are cleaved as a propeptide — activation peptide. 2 N-linked (GlcNAc...) asparagine glycosylation sites follow: N53 and N96. Cystine bridges form between C120–C161, C154–C195, and C253–C301. The active site involves C123. Active-site residues include H260 and N280.

Belongs to the peptidase C1 family.

The protein resides in the lysosome. It catalyses the reaction The recombinant human enzyme hydrolyzes synthetic endopeptidase substrates including Z-Phe-Arg-NHMec and Z-Arg-Arg-NHMec.. Functionally, proteolytic enzyme possibly involved in normal cellular protein degradation and turnover. This Mus musculus (Mouse) protein is Cathepsin O (Ctso).